The chain runs to 367 residues: Molybdopterin synthase catalytic subunit (367 aa).

Residues 101 to 102, K117, and 124 to 126 each bind substrate; these read HR and KKE.

Belongs to the MoaE family. MOCS2B subfamily. As to quaternary structure, heterotetramer; composed of 2 small (Mocs2A) and 2 large (Mocs2B) subunits.

It localises to the cytoplasm. The enzyme catalyses 2 [molybdopterin-synthase sulfur-carrier protein]-C-terminal-Gly-aminoethanethioate + cyclic pyranopterin phosphate + H2O = molybdopterin + 2 [molybdopterin-synthase sulfur-carrier protein]-C-terminal Gly-Gly + 2 H(+). The protein operates within cofactor biosynthesis; molybdopterin biosynthesis. Catalytic subunit of the molybdopterin synthase complex, a complex that catalyzes the conversion of precursor Z into molybdopterin. Acts by mediating the incorporation of 2 sulfur atoms from thiocarboxylated Mocs2A into precursor Z to generate a dithiolene group. The protein is Molybdopterin synthase catalytic subunit of Drosophila erecta (Fruit fly).